Reading from the N-terminus, the 274-residue chain is Large ribosomal subunit protein uL2 (274 aa).

Disordered stretches follow at residues 28–55 (APHAPLLEKKSKSGGRNNNGRITTRHVG) and 224–274 (VAMN…RRRK).

Belongs to the universal ribosomal protein uL2 family. As to quaternary structure, part of the 50S ribosomal subunit. Forms a bridge to the 30S subunit in the 70S ribosome.

Functionally, one of the primary rRNA binding proteins. Required for association of the 30S and 50S subunits to form the 70S ribosome, for tRNA binding and peptide bond formation. It has been suggested to have peptidyltransferase activity; this is somewhat controversial. Makes several contacts with the 16S rRNA in the 70S ribosome. The chain is Large ribosomal subunit protein uL2 from Pseudomonas putida (strain GB-1).